A 488-amino-acid polypeptide reads, in one-letter code: Ribulose bisphosphate carboxylase large chain (488 aa).

Substrate is bound by residues asparagine 127 and threonine 177. The active-site Proton acceptor is the lysine 179. Substrate is bound at residue lysine 181. Residues lysine 205, aspartate 207, and glutamate 208 each contribute to the Mg(2+) site. An N6-carboxylysine modification is found at lysine 205. Histidine 297 functions as the Proton acceptor in the catalytic mechanism. Residues arginine 298, histidine 330, and serine 382 each contribute to the substrate site.

The protein belongs to the RuBisCO large chain family. Type I subfamily. As to quaternary structure, heterohexadecamer of 8 large chains and 8 small chains. Mg(2+) is required as a cofactor.

The protein resides in the plastid. It is found in the chloroplast. It catalyses the reaction 2 (2R)-3-phosphoglycerate + 2 H(+) = D-ribulose 1,5-bisphosphate + CO2 + H2O. The enzyme catalyses D-ribulose 1,5-bisphosphate + O2 = 2-phosphoglycolate + (2R)-3-phosphoglycerate + 2 H(+). RuBisCO catalyzes two reactions: the carboxylation of D-ribulose 1,5-bisphosphate, the primary event in carbon dioxide fixation, as well as the oxidative fragmentation of the pentose substrate in the photorespiration process. Both reactions occur simultaneously and in competition at the same active site. The chain is Ribulose bisphosphate carboxylase large chain from Ectocarpus siliculosus (Brown alga).